A 216-amino-acid polypeptide reads, in one-letter code: Ras-related protein Rab-2B (216 aa).

Residues G16, V17, G18, K19, S20, C21, and T38 each contribute to the GTP site. A Mg(2+)-binding site is contributed by S20. Residues 37 to 42 (LTIGVE) carry the Switch 1 motif. T38 and D61 together coordinate Mg(2+). Residues 63–72 (AGQESFRSIT) carry the Switch 2 motif. Positions 64, 119, 120, 122, 150, and 151 each coordinate GTP. Over residues 189–207 (PQQSITSSVGPCSPQQNVS) the composition is skewed to polar residues. The disordered stretch occupies residues 189 to 216 (PQQSITSSVGPCSPQQNVSDIGPDSGCC). 2 S-geranylgeranyl cysteine lipidation sites follow: C215 and C216.

It belongs to the small GTPase superfamily. Rab family. As to quaternary structure, interacts (in GTP-bound form) with GARIN4 (via N-terminus). Interacts (in GTP-bound form) with GARIN5A. Interacts (in GTP-bound form) with GARIN1B. Interacts with VPS39 and VPS41. Mg(2+) is required as a cofactor.

It localises to the cell membrane. The protein localises to the endoplasmic reticulum membrane. It is found in the golgi apparatus membrane. Its subcellular location is the cytoplasmic vesicle. The protein resides in the secretory vesicle. It localises to the acrosome. The protein localises to the autophagosome membrane. The enzyme catalyses GTP + H2O = GDP + phosphate + H(+). With respect to regulation, regulated by guanine nucleotide exchange factors (GEFs) which promote the exchange of bound GDP for free GTP, GTPase activating proteins (GAPs) which increase the GTP hydrolysis activity, and GDP dissociation inhibitors (GDIs) which inhibit the dissociation of the nucleotide from the GTPase. Functionally, the small GTPases Rab are key regulators of intracellular membrane trafficking, from the formation of transport vesicles to their fusion with membranes. Rabs cycle between active GTP-bound and inactive GDP-bound states. In their active state, drive transport of vesicular carriers from donor organelles to acceptor organelles to regulate the membrane traffic that maintains organelle identity and morphology. Regulates the compacted morphology of the Golgi. Promotes cytosolic DNA-induced innate immune responses. Regulates IFN responses against DNA viruses by regulating the CGAS-STING signaling axis. Together with RAB2A redundantly required for efficient autophagic flux. The protein is Ras-related protein Rab-2B (Rab2b) of Mus musculus (Mouse).